Here is a 231-residue protein sequence, read N- to C-terminus: Flagellar L-ring protein (231 aa).

The signal sequence occupies residues 1-20 (MTYRRIPLYLSCLFLLALSG). A lipid anchor (N-palmitoyl cysteine) is attached at Cys21. A lipid anchor (S-diacylglycerol cysteine) is attached at Cys21.

Belongs to the FlgH family. In terms of assembly, the basal body constitutes a major portion of the flagellar organelle and consists of four rings (L,P,S, and M) mounted on a central rod.

It localises to the cell outer membrane. The protein localises to the bacterial flagellum basal body. Functionally, assembles around the rod to form the L-ring and probably protects the motor/basal body from shearing forces during rotation. This is Flagellar L-ring protein from Desulfotalea psychrophila (strain LSv54 / DSM 12343).